We begin with the raw amino-acid sequence, 339 residues long: tRNA N6-adenosine threonylcarbamoyltransferase (339 aa).

The Fe cation site is built by His-111 and His-115. Substrate contacts are provided by residues 134-138 (LVSGG), Asp-167, Gly-180, and Asn-272. Position 300 (Asp-300) interacts with Fe cation.

Belongs to the KAE1 / TsaD family. The cofactor is Fe(2+).

It is found in the cytoplasm. It carries out the reaction L-threonylcarbamoyladenylate + adenosine(37) in tRNA = N(6)-L-threonylcarbamoyladenosine(37) in tRNA + AMP + H(+). Its function is as follows. Required for the formation of a threonylcarbamoyl group on adenosine at position 37 (t(6)A37) in tRNAs that read codons beginning with adenine. Is involved in the transfer of the threonylcarbamoyl moiety of threonylcarbamoyl-AMP (TC-AMP) to the N6 group of A37, together with TsaE and TsaB. TsaD likely plays a direct catalytic role in this reaction. The chain is tRNA N6-adenosine threonylcarbamoyltransferase from Sodalis glossinidius (strain morsitans).